Reading from the N-terminus, the 528-residue chain is Tyrosine 3-monooxygenase (528 aa).

A Phosphoserine; by CaMK2 modification is found at S19. The disordered stretch occupies residues G33–F65. The segment covering P47–T59 has biased composition (low complexity). At S62 the chain carries Phosphoserine. The residue at position 71 (S71) is a Phosphoserine; by CaMK2 and PKA. Residues H361, H366, and E406 each coordinate Fe cation. S502 carries the phosphoserine modification.

Belongs to the biopterin-dependent aromatic amino acid hydroxylase family. Homotetramer. Interacts (when phosphorylated at Ser-19) with YWHAG; one YWHAG dimer binds to one TH tetramer and this interaction may influence the phosphorylation and dephosphorylation of other sites. Interacts with NT5DC2; the interaction results in reduced phosphorylation and decreased catalytic activity of TH. Fe(2+) serves as cofactor. Post-translationally, phosphorylated on Ser-19, Ser-62 and Ser-71 by several protein kinases with different site specificities. Phosphorylation at Ser-62 and Ser-71 leads to an increase of TH activity. Phosphorylation at Ser-71 activates the enzyme and also counteracts the feedback inhibition of TH by catecholamines. Phosphorylation of Ser-19 and Ser-62 triggers the proteasomal degradation of TH through the ubiquitin-proteasome pathway. Phosphorylation at Ser-62 facilitates transport of TH from the soma to the nerve terminals via the microtubule network. Phosphorylation at Ser-19 induces the high-affinity binding to the 14-3-3 protein YWHAG; this interaction may influence the phosphorylation and dephosphorylation of other sites. Ser-19 increases the phosphorylation at Ser-71 in a hierarchical manner, leading to increased activity. In terms of tissue distribution, mainly expressed in the brain and adrenal glands.

The protein resides in the cytoplasm. It is found in the perinuclear region. The protein localises to the nucleus. It localises to the cell projection. Its subcellular location is the axon. The protein resides in the cytoplasmic vesicle. It is found in the secretory vesicle. The protein localises to the synaptic vesicle. It catalyses the reaction (6R)-L-erythro-5,6,7,8-tetrahydrobiopterin + L-tyrosine + O2 = (4aS,6R)-4a-hydroxy-L-erythro-5,6,7,8-tetrahydrobiopterin + L-dopa. It functions in the pathway catecholamine biosynthesis; dopamine biosynthesis; dopamine from L-tyrosine: step 1/2. With respect to regulation, inhibited in feedback fashion by the catecholamine neurotransmitters, especially by dopamine in competition with tetrahydrobiopterin. Phosphorylation of several Ser/Thr residues in the N-terminus regulates the catalytic activity. Ser-62 and Ser-71 are readily phosphorylated to activate the catalytic activity. A Cysteine modification induced by N-ethylmaleimide (NEM), inhibits tyrosine 3-monooxygenase activity through the modification of the Cys-207. Functionally, catalyzes the conversion of L-tyrosine to L-dihydroxyphenylalanine (L-Dopa), the rate-limiting step in the biosynthesis of catecholamines, dopamine, noradrenaline, and adrenaline. Uses tetrahydrobiopterin and molecular oxygen to convert tyrosine to L-Dopa. In addition to tyrosine, is able to catalyze the hydroxylation of phenylalanine and tryptophan with lower specificity. Positively regulates the regression of retinal hyaloid vessels during postnatal development. Its function is as follows. Lacks catalytic activity. This chain is Tyrosine 3-monooxygenase, found in Homo sapiens (Human).